Reading from the N-terminus, the 234-residue chain is Proteasome subunit alpha (234 aa).

This sequence belongs to the peptidase T1A family. In terms of assembly, the 20S proteasome core is composed of 14 alpha and 14 beta subunits that assemble into four stacked heptameric rings, resulting in a barrel-shaped structure. The two inner rings, each composed of seven catalytic beta subunits, are sandwiched by two outer rings, each composed of seven alpha subunits. The catalytic chamber with the active sites is on the inside of the barrel. Has a gated structure, the ends of the cylinder being occluded by the N-termini of the alpha-subunits. Is capped at one or both ends by the proteasome regulatory ATPase, PAN.

The protein localises to the cytoplasm. Its activity is regulated as follows. The formation of the proteasomal ATPase PAN-20S proteasome complex, via the docking of the C-termini of PAN into the intersubunit pockets in the alpha-rings, triggers opening of the gate for substrate entry. Interconversion between the open-gate and close-gate conformations leads to a dynamic regulation of the 20S proteasome proteolysis activity. Functionally, component of the proteasome core, a large protease complex with broad specificity involved in protein degradation. In Picrophilus torridus (strain ATCC 700027 / DSM 9790 / JCM 10055 / NBRC 100828 / KAW 2/3), this protein is Proteasome subunit alpha.